Here is a 27-residue protein sequence, read N- to C-terminus: CD59 glycoprotein (27 aa).

2 cysteine pairs are disulfide-bonded: C3–C25 and C6–C12. N17 is a glycosylation site (N-linked (GlcNAc...) asparagine).

Interacts with T-cell surface antigen CD2. N- and O-glycosylated. As to expression, expressed in erythrocytes and lymphocytes. Not detected in platelets.

It is found in the cell membrane. The protein localises to the secreted. Potent inhibitor of the complement membrane attack complex (MAC) action, which protects self-cells from damage during complement activation. Acts by binding to the beta-haipins of C8 (C8A and C8B) components of the assembling MAC, forming an intermolecular beta-sheet that prevents incorporation of the multiple copies of C9 required for complete formation of the osmolytic pore. This chain is CD59 glycoprotein, found in Ovis aries (Sheep).